The chain runs to 286 residues: Small ribosomal subunit protein uS15m (286 aa).

Residues 1-33 (MSIVGRNAILNLRISLCPLFMGKRSFVSSPVSN) constitute a mitochondrion transit peptide.

Belongs to the universal ribosomal protein uS15 family. As to quaternary structure, component of the mitochondrial small ribosomal subunit (mt-SSU). Mature yeast 74S mitochondrial ribosomes consist of a small (37S) and a large (54S) subunit. The 37S small subunit contains a 15S ribosomal RNA (15S mt-rRNA) and 34 different proteins. The 54S large subunit contains a 21S rRNA (21S mt-rRNA) and 46 different proteins. Post-translationally, the precursor is processed in two steps involving mitochondrial intermediate peptidase (MIP) and mitochondrial processing peptidase (MPP).

It localises to the mitochondrion. Its function is as follows. Component of the mitochondrial ribosome (mitoribosome), a dedicated translation machinery responsible for the synthesis of mitochondrial genome-encoded proteins, including at least some of the essential transmembrane subunits of the mitochondrial respiratory chain. The mitoribosomes are attached to the mitochondrial inner membrane and translation products are cotranslationally integrated into the membrane. This is Small ribosomal subunit protein uS15m (MRPS28) from Saccharomyces cerevisiae (strain ATCC 204508 / S288c) (Baker's yeast).